A 2225-amino-acid polypeptide reads, in one-letter code: Multifunctional protein CAD (2225 aa).

Ala-2 carries the N-acetylalanine modification. Residues 2-365 are GATase (Glutamine amidotransferase); the sequence is AALVLEDGSV…TVKEATAGNP (364 aa). L-glutamine contacts are provided by Ser-44, Gly-222, and Gly-224. The region spanning 177–363 is the Glutamine amidotransferase type-1 domain; it reads RILALDCGLK…LETVKEATAG (187 aa). The Nucleophile; for GATase activity role is filled by Cys-252. L-glutamine is bound by residues Leu-253, Gln-256, Asn-294, Gly-296, and Phe-297. Residues His-336 and Glu-338 each act as for GATase activity in the active site. Positions 366 to 394 are linker; it reads GGQTVRERLTERLCPPGIPTPGSGLPPPR. Residues 395-933 are CPSase A; that stretch reads KVLILGSGGL…TTHDLTFRTP (539 aa). The segment at 395 to 1455 is CPSase (Carbamoyl phosphate synthase); sequence KVLILGSGGL…APPLKVHVDC (1061 aa). Position 456 is a phosphothreonine; by MAPK1 (Thr-456). Arg-515, Arg-555, Gly-561, Gly-562, Lys-592, Glu-599, Gly-625, Ile-626, His-627, Gln-668, and Glu-682 together coordinate ATP. The region spanning 519–711 is the ATP-grasp 1 domain; it reads AARMAEIGEH…LAYVAAKLAL (193 aa). The Mg(2+) site is built by Gln-668, Glu-682, and Asn-684. Mn(2+) contacts are provided by Gln-668, Glu-682, and Asn-684. Residue Lys-747 is modified to N6-acetyllysine. Residues 934–1455 are CPSase B; that stretch reads HVLVLGSGVY…APPLKVHVDC (522 aa). A Phosphoserine modification is found at Ser-1038. The region spanning 1052 to 1243 is the ATP-grasp 2 domain; that stretch reads SRLLDTIGIS…LVALATRVIM (192 aa). The ATP site is built by Arg-1088, Lys-1127, Ile-1129, Glu-1134, Gly-1159, Val-1160, His-1161, Ser-1162, Gln-1202, and Glu-1214. Mg(2+)-binding residues include Gln-1202, Glu-1214, and Asn-1216. 3 residues coordinate Mn(2+): Gln-1202, Glu-1214, and Asn-1216. The region spanning 1308 to 1462 is the MGS-like domain; that stretch reads FKIPKKNILL…VDCMTSQKLV (155 aa). Ser-1406 carries the phosphoserine; by PKA modification. Position 1411 is an N6-acetyllysine (Lys-1411). The DHOase (dihydroorotase) stretch occupies residues 1456-1788; it reads MTSQKLVRLP…VKGTVRRVVL (333 aa). Zn(2+) is bound by residues His-1471 and His-1473. 2 residues coordinate (S)-dihydroorotate: Arg-1475 and Asn-1505. Residues Lys-1556, His-1590, Cys-1613, His-1614, and Glu-1637 each coordinate Zn(2+). Lys-1556 carries the post-translational modification N6-carboxylysine. (S)-dihydroorotate is bound at residue Arg-1661. Position 1686 (Asp-1686) interacts with Zn(2+). Residue Asp-1686 is the For DHOase activity of the active site. 2 residues coordinate (S)-dihydroorotate: His-1690 and Pro-1702. The segment at 1789–1917 is linker; that stretch reads RGEVAYIDGQ…GLLHPQTSPL (129 aa). The tract at residues 1811–1899 is disordered; sequence KWPQGAVPQL…YPPPPVPRQA (89 aa). Residues 1825–1834 show a composition bias toward polar residues; the sequence is PATSEMTTTP. Position 1859 is a phosphoserine; by RPS6KB1 and PKA (Ser-1859). Residues 1866-1878 are compositionally biased toward basic and acidic residues; it reads EEPKEKSSRKVAE. A Phosphoserine; by PKC; in vitro modification is found at Ser-1873. Position 1884 is a phosphothreonine (Thr-1884). 2 positions are modified to phosphoserine: Ser-1900 and Ser-1938. An ATCase (Aspartate transcarbamylase) region spans residues 1918–2225; it reads LHSLVGQHIL…ALLATVLGRF (308 aa). 2 residues coordinate carbamoyl phosphate: Arg-1975 and Thr-1976. Position 2003 (Lys-2003) interacts with L-aspartate. Residues Arg-2024, His-2052, and Gln-2055 each contribute to the carbamoyl phosphate site. L-aspartate contacts are provided by Arg-2085 and Arg-2146. Carbamoyl phosphate contacts are provided by Met-2185 and Pro-2186.

This sequence in the N-terminal section; belongs to the CarA family. It in the 2nd section; belongs to the CarB family. In the 3rd section; belongs to the metallo-dependent hydrolases superfamily. DHOase family. CAD subfamily. The protein in the C-terminal section; belongs to the aspartate/ornithine carbamoyltransferase superfamily. ATCase family. Homohexamer. Interacts with CIPC. Zn(2+) is required as a cofactor. Requires Mg(2+) as cofactor. Mn(2+) serves as cofactor. Activated by MAP kinase (Erk1/2) phosphorylation just prior to the S phase of the cell cycle, when the demand for pyrimidine nucleotides is greatest, and down-regulated as the cells emerge from S phase by protein kinase A (PKA) phosphorylation. Phosphorylation at Ser-1859 by RPS6KB1 downstream of MTOR promotes oligomerization and stimulates dihydroorotase activity. Phosphorylation at Ser-1406 reduces sensitivity to feedback inhibition by UTP.

The protein localises to the cytoplasm. The protein resides in the nucleus. It catalyses the reaction hydrogencarbonate + L-glutamine + 2 ATP + H2O = carbamoyl phosphate + L-glutamate + 2 ADP + phosphate + 2 H(+). The enzyme catalyses L-glutamine + H2O = L-glutamate + NH4(+). It carries out the reaction hydrogencarbonate + NH4(+) + 2 ATP = carbamoyl phosphate + 2 ADP + phosphate + 2 H(+). The catalysed reaction is carbamoyl phosphate + L-aspartate = N-carbamoyl-L-aspartate + phosphate + H(+). It catalyses the reaction (S)-dihydroorotate + H2O = N-carbamoyl-L-aspartate + H(+). It functions in the pathway pyrimidine metabolism; UMP biosynthesis via de novo pathway; (S)-dihydroorotate from bicarbonate: step 1/3. Its pathway is pyrimidine metabolism; UMP biosynthesis via de novo pathway; (S)-dihydroorotate from bicarbonate: step 2/3. It participates in pyrimidine metabolism; UMP biosynthesis via de novo pathway; (S)-dihydroorotate from bicarbonate: step 3/3. Its activity is regulated as follows. Allosterically regulated and controlled by phosphorylation. 5-phosphoribose 1-diphosphate (PRPP) is an activator while UMP and UTP are inhibitors of the CPSase reaction. In terms of biological role, multifunctional protein that encodes the first 3 enzymatic activities of the de novo pyrimidine pathway: carbamoylphosphate synthetase (CPSase; EC 6.3.5.5), aspartate transcarbamylase (ATCase; EC 2.1.3.2) and dihydroorotase (DHOase; EC 3.5.2.3). The CPSase-function is accomplished in 2 steps, by a glutamine-dependent amidotransferase activity (GATase) that binds and cleaves glutamine to produce ammonia, followed by an ammonium-dependent carbamoyl phosphate synthetase, which reacts with the ammonia, hydrogencarbonate and ATP to form carbamoyl phosphate. The endogenously produced carbamoyl phosphate is sequestered and channeled to the ATCase active site. ATCase then catalyzes the formation of carbamoyl-L-aspartate from L-aspartate and carbamoyl phosphate. In the last step, DHOase catalyzes the cyclization of carbamoyl aspartate to dihydroorotate. This is Multifunctional protein CAD from Homo sapiens (Human).